Consider the following 146-residue polypeptide: 3-dehydroquinate dehydratase (146 aa).

Catalysis depends on Y23, which acts as the Proton acceptor. Positions 75, 81, and 88 each coordinate substrate. The Proton donor role is filled by H101. Residues 102-103 (LS) and R112 contribute to the substrate site.

This sequence belongs to the type-II 3-dehydroquinase family. As to quaternary structure, homododecamer.

It carries out the reaction 3-dehydroquinate = 3-dehydroshikimate + H2O. It functions in the pathway metabolic intermediate biosynthesis; chorismate biosynthesis; chorismate from D-erythrose 4-phosphate and phosphoenolpyruvate: step 3/7. Functionally, catalyzes a trans-dehydration via an enolate intermediate. This Marinobacter nauticus (strain ATCC 700491 / DSM 11845 / VT8) (Marinobacter aquaeolei) protein is 3-dehydroquinate dehydratase.